A 422-amino-acid polypeptide reads, in one-letter code: O-methyltransferase kk1A (422 aa).

S-adenosyl-L-methionine is bound at residue Asp277. His320 functions as the Proton acceptor in the catalytic mechanism.

The protein belongs to the class I-like SAM-binding methyltransferase superfamily. Cation-independent O-methyltransferase family.

It participates in secondary metabolite biosynthesis. In terms of biological role, O-methyltransferase; part of the gene cluster that mediates the biosynthesis of KK-1, a novel cyclic depsipeptide with 10 residues which is a promising active compound with high activity against many plant pathogens, especially Botrytis cinerea. Within the pathway, kk1A is responsible for the O-methylation of tyrosine as a free amino acid before its activation as an aminoacyl-AMP by the corresponding A domain of kk1B. The nonribosomal peptide synthetase (NRPS) kk1B catalyzes the elongation and cyclization of the decapeptide chain composed of 1 D-lactic acid residue (D-Lac), 1 pipecolic acid residue (Pip), 1 aspartic acid residue (Asp), 1 isoleucine residue (Ile), 1 glycine residue (Gly), 1 tyrosine residue (Tyr) and 4 valine residues (Val). The Asp, Ile and 3 Val residues are N-methylated by the 5 methyltransferase domains from the NRPS (found in modules 3, 5, 6, 7 and 9), whereas the Tyr residue is O-methylated by the cluster encoded O-methyltransferase kk1A. The thioesterase kk1J is likely to be involved in the corrective mechanism of peptide chain synthesis. The D-lactate dehydrogenase kk1H is involved in the synthesis of D-lactic acid from pyruvic acid, which is recognized by the A domain of the first kk1B module. The pyrroline-5-carboxylate reductase kk1I is involved in the synthesis of the L-pipecolic acid residue of KK-1 from delta-1-pyrroline-5-carboxylate (P5C), a metabolic intermediate of lysine. It is still unclear how kk1C and kk1D are involved in the production of KK-1. This chain is O-methyltransferase kk1A, found in Curvularia clavata.